Here is a 548-residue protein sequence, read N- to C-terminus: Biotin-dependent acetyl-/propionyl-coenzyme A carboxylase beta5 subunit (548 aa).

Residues 1–23 are disordered; the sequence is MTSVTDRSAHSAERSTEHTIDIH. Over residues 7–21 the composition is skewed to basic and acidic residues; that stretch reads RSAHSAERSTEHTID. The CoA carboxyltransferase N-terminal domain maps to 25 to 281; that stretch reads TAGKLAELHK…NNSTDAPRYQ (257 aa). Residues 295-541 enclose the CoA carboxyltransferase C-terminal domain; that stretch reads DEDLELDTLI…ERKIAQLPPK (247 aa).

Belongs to the AccD/PCCB family. As to quaternary structure, the biotin-dependent acyl-CoA carboxylase complex is composed of AccA3, which contains the biotin carboxylase (BC) and biotin carboxyl carrier protein (BCCP) domains, and AccD5, which contains the carboxyl transferase (CT) domain.

The enzyme catalyses N(6)-carboxybiotinyl-L-lysyl-[protein] + acetyl-CoA = N(6)-biotinyl-L-lysyl-[protein] + malonyl-CoA. It catalyses the reaction N(6)-carboxybiotinyl-L-lysyl-[protein] + propanoyl-CoA = methylmalonyl-CoA + N(6)-biotinyl-L-lysyl-[protein]. The protein operates within lipid metabolism; mycolic acid biosynthesis. Its function is as follows. Component of a biotin-dependent acyl-CoA carboxylase complex. This subunit transfers the CO2 from carboxybiotin to the CoA ester substrate. When associated with the alpha3 subunit AccA3, is involved in the carboxylation of acetyl-CoA and propionyl-CoA. This is Biotin-dependent acetyl-/propionyl-coenzyme A carboxylase beta5 subunit (accD5) from Mycobacterium tuberculosis (strain CDC 1551 / Oshkosh).